The chain runs to 513 residues: Ankyrin repeat-containing protein YIL001W (513 aa).

2 ANK repeats span residues 8–37 (KNFE…NVNS) and 41–70 (FDNS…VCDR). BTB domains are found at residues 122–179 (RDIT…KFLY) and 274–360 (PDVQ…DIPW).

This Saccharomyces cerevisiae (strain ATCC 204508 / S288c) (Baker's yeast) protein is Ankyrin repeat-containing protein YIL001W.